A 209-amino-acid polypeptide reads, in one-letter code: MSQVDINHARALVYQLLSSLFAREVDEQRLKELTSEAAQQFWEQLSLEAKLTQSVDKIRSTLNGIKDDETLLELAADYCGLFLVGTKHSASPYASLYLSGEDEPLLFGQQHQQMSEFLHQSKLQVQSHFPEPADHLAVMLAYMAHLCCHSEDSVQLSFLQTCVDSWLAKFINQLTQCDKNGFYSAVAILTLAWVKQDIAQLEPAEAVIS.

The protein belongs to the TorD/DmsD family. TorD subfamily.

It localises to the cytoplasm. In terms of biological role, involved in the biogenesis of TorA. Acts on TorA before the insertion of the molybdenum cofactor and, as a result, probably favors a conformation of the apoenzyme that is competent for acquiring the cofactor. The sequence is that of Chaperone protein TorD from Shewanella baltica (strain OS185).